We begin with the raw amino-acid sequence, 547 residues long: Glucose-6-phosphate isomerase (547 aa).

Residue Glu-351 is the Proton donor of the active site. Active-site residues include His-382 and Lys-511.

The protein belongs to the GPI family.

The protein localises to the cytoplasm. The catalysed reaction is alpha-D-glucose 6-phosphate = beta-D-fructose 6-phosphate. It functions in the pathway carbohydrate biosynthesis; gluconeogenesis. The protein operates within carbohydrate degradation; glycolysis; D-glyceraldehyde 3-phosphate and glycerone phosphate from D-glucose: step 2/4. Functionally, catalyzes the reversible isomerization of glucose-6-phosphate to fructose-6-phosphate. The protein is Glucose-6-phosphate isomerase of Xanthobacter autotrophicus (strain ATCC BAA-1158 / Py2).